We begin with the raw amino-acid sequence, 736 residues long: Subtilisin-like protease SBT4.11 (736 aa).

An N-terminal signal peptide occupies residues 1 to 25 (MAKRGAFSSFHSFLIVLLFLNSVLA). Positions 26–113 (VTHGHQDKQV…VFPNKKLKLQ (88 aa)) are cleaved as a propeptide — activation peptide. Positions 35–112 (VYIVYMGSLP…SVFPNKKLKL (78 aa)) constitute an Inhibitor I9 domain. The region spanning 117–579 (SWDFMGLKEG…AGHVDPIAAT (463 aa)) is the Peptidase S8 domain. The Charge relay system role is filled by D145. N176 is a glycosylation site (N-linked (GlcNAc...) asparagine). H200 acts as the Charge relay system in catalysis. N215 and N223 each carry an N-linked (GlcNAc...) asparagine glycan. The region spanning 355–437 (KFPLVYGKSA…GLQKDDFESV (83 aa)) is the PA domain. Catalysis depends on S518, which acts as the Charge relay system. 5 N-linked (GlcNAc...) asparagine glycosylation sites follow: N555, N602, N638, N646, and N656.

The protein belongs to the peptidase S8 family. In terms of processing, the C-terminal propeptide is autocleaved.

It is found in the secreted. This chain is Subtilisin-like protease SBT4.11, found in Arabidopsis thaliana (Mouse-ear cress).